The primary structure comprises 295 residues: Hepatic leukemia factor (295 aa).

Basic and acidic residues predominate over residues 37-52 (EDAFSKDKDKEKKLDD). Disordered regions lie at residues 37–70 (EDAFSKDKDKEKKLDDESNSPTVPQSAFLGPTLW) and 93–167 (SENG…IDPD). Residues 225-288 (DDKYWARRRK…GKCKNILAKY (64 aa)) enclose the bZIP domain. The segment at 227–247 (KYWARRRKNNMAAKRSRDARR) is basic motif. The interval 248–255 (LKENQIAI) is leucine-zipper.

Belongs to the bZIP family. PAR subfamily. As to quaternary structure, binds DNA specifically as homodimer or heterodimer with other PAR factors. Highly expressed in liver; lower levels in lung and kidney.

It is found in the nucleus. In Homo sapiens (Human), this protein is Hepatic leukemia factor (HLF).